A 350-amino-acid chain; its full sequence is MILFYFMQTPLYYVHKHLKAKFTNFAGWTMPLQYTSIIEEVRAVRXRAGVFDISHMGRLLIEDPEKKLQYFTTNNLDKLSVGKVQYNLLPNEKGGIKDDVTVYMLSEIEFFLCVNAANRQKVINWLSPHLKLRDLSGELVQIALQGPKSEEIISKFYPVSDLKYYRFKVFDKTIISRTGYTGEDGFEIYVSPEEGKELFLELVKLAKPCGLGARDVLRIEAGLPLYGNELSEEITPIEVNLEKFVDFSKEFIGKEAMLKKKVKKKLFGLELTEKGIPRKGYRVFKGDREIGWISSGTYSPTLNKGIALCFVDIEERKEGNEVEIEVRGRRVRGVLRKYPFVRTPAGRYQK.

Belongs to the GcvT family. In terms of assembly, the glycine cleavage system is composed of four proteins: P, T, L and H.

The catalysed reaction is N(6)-[(R)-S(8)-aminomethyldihydrolipoyl]-L-lysyl-[protein] + (6S)-5,6,7,8-tetrahydrofolate = N(6)-[(R)-dihydrolipoyl]-L-lysyl-[protein] + (6R)-5,10-methylene-5,6,7,8-tetrahydrofolate + NH4(+). Its function is as follows. The glycine cleavage system catalyzes the degradation of glycine. This chain is Aminomethyltransferase, found in Aquifex aeolicus (strain VF5).